The following is a 189-amino-acid chain: MGLLDAGITQHNVLITSVDNVLNWARLSSLWPMGFGLACCAIEMMATNASNYDLERFGIFPRSSPRQSDLMIVAGTVTMKMAERVIRLYEQMPEPRYVLSMGSCSNCGGPYWEHGYHVLKGVDRVIPVDVFVPGCPPRPESLIGGLMKVQELIRMEQIGLSRADALKKLAEKSVDPQFVIERERKAAGA.

Residues Cys39, Cys40, Cys104, and Cys135 each coordinate [4Fe-4S] cluster.

This sequence belongs to the complex I 20 kDa subunit family. In terms of assembly, NDH-1 is composed of 14 different subunits. Subunits NuoB, C, D, E, F, and G constitute the peripheral sector of the complex. Requires [4Fe-4S] cluster as cofactor.

It localises to the cell inner membrane. It catalyses the reaction a quinone + NADH + 5 H(+)(in) = a quinol + NAD(+) + 4 H(+)(out). Its function is as follows. NDH-1 shuttles electrons from NADH, via FMN and iron-sulfur (Fe-S) centers, to quinones in the respiratory chain. The immediate electron acceptor for the enzyme in this species is believed to be a menaquinone. Couples the redox reaction to proton translocation (for every two electrons transferred, four hydrogen ions are translocated across the cytoplasmic membrane), and thus conserves the redox energy in a proton gradient. This Pelodictyon phaeoclathratiforme (strain DSM 5477 / BU-1) protein is NADH-quinone oxidoreductase subunit B.